A 115-amino-acid chain; its full sequence is Large ribosomal subunit protein bL20 (115 aa).

Belongs to the bacterial ribosomal protein bL20 family.

In terms of biological role, binds directly to 23S ribosomal RNA and is necessary for the in vitro assembly process of the 50S ribosomal subunit. It is not involved in the protein synthesizing functions of that subunit. The polypeptide is Large ribosomal subunit protein bL20 (Methylococcus capsulatus (strain ATCC 33009 / NCIMB 11132 / Bath)).